Here is a 229-residue protein sequence, read N- to C-terminus: Cytidylate kinase (229 aa).

An ATP-binding site is contributed by 12-20; sequence GPSGTGKSS.

This sequence belongs to the cytidylate kinase family. Type 1 subfamily.

The protein resides in the cytoplasm. It catalyses the reaction CMP + ATP = CDP + ADP. It carries out the reaction dCMP + ATP = dCDP + ADP. The polypeptide is Cytidylate kinase (Rhodococcus jostii (strain RHA1)).